A 538-amino-acid polypeptide reads, in one-letter code: Interleukin-21 receptor (538 aa).

The signal sequence occupies residues 1–19 (MPRGWAAPLLLLLLQGGWG). Disulfide bonds link Cys-20-Cys-109, Cys-25-Cys-35, and Cys-65-Cys-81. Over 20-232 (CPDLVCYTDY…FQTQSEELKE (213 aa)) the chain is Extracellular. Fibronectin type-III domains lie at 21 to 118 (PDLV…AESI) and 119 to 228 (KPAP…TQSE). N-linked (GlcNAc...) asparagine glycans are attached at residues Asn-73, Asn-97, Asn-104, Asn-125, and Asn-135. Trp-214 is a glycosylation site (C-linked (Man) tryptophan). Residues 214-218 (WSEWS) carry the WSXWS motif motif. The chain crosses the membrane as a helical span at residues 233–253 (GWNPHLLLLLLLVIVFIPAFW). The Cytoplasmic portion of the chain corresponds to 254 to 538 (SLKTHPLWRL…PLSSPGPQAS (285 aa)). The Box 1 motif motif lies at 266–274 (KIWAVPSPE). 2 disordered regions span residues 342–367 (ESDG…SEER) and 457–487 (EDWA…GLDM).

Belongs to the type I cytokine receptor family. Type 4 subfamily. In terms of assembly, heterodimer with the common gamma subunit. Associates with JAK1. In terms of processing, C-mannosylated at Trp-214 in the WSXWS motif, the sugar chain makes extensive hydrogen bonds with Asn-73 sugar, and bridges the two fibronectin domains transforming the V-shaped receptor into an A-frame. In terms of tissue distribution, selectively expressed in lymphoid tissues. Most highly expressed in thymus and spleen.

It localises to the membrane. Functionally, this is a receptor for interleukin-21. This chain is Interleukin-21 receptor (IL21R), found in Homo sapiens (Human).